Here is a 299-residue protein sequence, read N- to C-terminus: Streptogrisin-B (299 aa).

The N-terminal stretch at 1–38 (MRIKRTSNRSNAARRVRTTAVLAGLAAVAALAVPTANA) is a signal peptide. Positions 39–114 (ETPRTFSANQ…ERTPGKFTKL (76 aa)) are excised as a propeptide. C128 and C148 form a disulfide bridge. Active-site charge relay system residues include H147, D177, and S255. C249 and C276 are joined by a disulfide.

This sequence belongs to the peptidase S1 family. In terms of assembly, monomer.

It catalyses the reaction Hydrolysis of proteins with trypsin-like specificity.. In terms of biological role, has a primary specificity for large aliphatic or aromatic amino acids. The chain is Streptogrisin-B (sprB) from Streptomyces griseus.